The chain runs to 1168 residues: Transcription-repair-coupling factor (1168 aa).

Positions 633–794 (DMQKSRPMDR…MLGVRDLSVI (162 aa)) constitute a Helicase ATP-binding domain. 646–653 (GDVGYGKT) serves as a coordination point for ATP. The short motif at 747–750 (DEEQ) is the DEEQ box element. Residues 808–969 (VLEQNMSFIK…GFKIAMRDLN (162 aa)) form the Helicase C-terminal domain.

In the N-terminal section; belongs to the UvrB family. This sequence in the C-terminal section; belongs to the helicase family. RecG subfamily.

The protein resides in the cytoplasm. Couples transcription and DNA repair by recognizing RNA polymerase (RNAP) stalled at DNA lesions. Mediates ATP-dependent release of RNAP and its truncated transcript from the DNA, and recruitment of nucleotide excision repair machinery to the damaged site. This is Transcription-repair-coupling factor from Staphylococcus aureus (strain USA300).